Consider the following 57-residue polypeptide: Small ribosomal subunit protein bS21 (57 aa).

The tract at residues 31 to 57 is disordered; that stretch reads EVRKRKHYEKPSVRRKKKSEAARKRKF. The segment covering 33 to 57 has biased composition (basic residues); sequence RKRKHYEKPSVRRKKKSEAARKRKF.

Belongs to the bacterial ribosomal protein bS21 family.

In Halalkalibacterium halodurans (strain ATCC BAA-125 / DSM 18197 / FERM 7344 / JCM 9153 / C-125) (Bacillus halodurans), this protein is Small ribosomal subunit protein bS21 (rpsU).